A 554-amino-acid polypeptide reads, in one-letter code: Hydroxylamine reductase (554 aa).

[2Fe-2S] cluster-binding residues include C3, C6, C18, and C25. Hybrid [4Fe-2O-2S] cluster is bound by residues H252, E276, C320, C408, C436, C461, E495, and K497. The residue at position 408 (C408) is a Cysteine persulfide.

It belongs to the HCP family. [2Fe-2S] cluster is required as a cofactor. It depends on hybrid [4Fe-2O-2S] cluster as a cofactor.

It is found in the cytoplasm. It carries out the reaction A + NH4(+) + H2O = hydroxylamine + AH2 + H(+). In terms of biological role, catalyzes the reduction of hydroxylamine to form NH(3) and H(2)O. The polypeptide is Hydroxylamine reductase (Shewanella sp. (strain MR-4)).